The following is a 258-amino-acid chain: Tryptophan synthase alpha chain (258 aa).

Active-site proton acceptor residues include Glu52 and Asp63.

It belongs to the TrpA family. As to quaternary structure, tetramer of two alpha and two beta chains.

The enzyme catalyses (1S,2R)-1-C-(indol-3-yl)glycerol 3-phosphate + L-serine = D-glyceraldehyde 3-phosphate + L-tryptophan + H2O. It participates in amino-acid biosynthesis; L-tryptophan biosynthesis; L-tryptophan from chorismate: step 5/5. Its function is as follows. The alpha subunit is responsible for the aldol cleavage of indoleglycerol phosphate to indole and glyceraldehyde 3-phosphate. The protein is Tryptophan synthase alpha chain of Streptococcus pneumoniae (strain JJA).